The chain runs to 284 residues: UPF0294 protein VV1_1880 (284 aa).

The protein belongs to the UPF0294 family.

It localises to the cytoplasm. In Vibrio vulnificus (strain CMCP6), this protein is UPF0294 protein VV1_1880.